We begin with the raw amino-acid sequence, 280 residues long: MSTKYESRYASSPQTVKQYDTQELRNEFLIDNLMQNDTINLTYTHYDRYIAGSAVPTSSPLTLETIDPLKSEYFLERRELGIINVGGTGSVTVDGTVYELGLKDALYVGMGNKDVVFASDDASNPAQFYLNSAPAHTNYPTKKVSKAEANKIELGTLETANHRTVNQMIIGGIVTTCQLQMGMTELKTGSVWNTMPAHVHNRRMEVYLYIDIPQDQAVCHFMGEPQETRHIWMQNNQAVISPPWSIHSGSGTSNYTFVWGMAGENLDYNDMDVAKITELR.

Histidine 198, histidine 200, glutamate 205, and histidine 247 together coordinate Zn(2+).

It belongs to the KduI family. Requires Zn(2+) as cofactor.

Its subcellular location is the cytoplasm. The catalysed reaction is 5-dehydro-4-deoxy-D-glucuronate = 3-deoxy-D-glycero-2,5-hexodiulosonate. Its function is as follows. Isomerase involved in ulvan degradation. Ulvan is the main polysaccharide component of the Ulvales (green seaweed) cell wall. It is composed of disaccharide building blocks comprising 3-sulfated rhamnose (Rha3S) linked to D-glucuronic acid (GlcA), L-iduronic acid (IduA), or D-xylose (Xyl). Catalyzes the isomerization of 5-dehydro-4-deoxy-D-glucuronate to 3-deoxy-D-glycero-2,5-hexodiulosonate. The chain is 4-deoxy-L-threo-5-hexosulose-uronate ketol-isomerase from Formosa agariphila (strain DSM 15362 / KCTC 12365 / LMG 23005 / KMM 3901 / M-2Alg 35-1).